Here is a 738-residue protein sequence, read N- to C-terminus: uncharacterized protein (738 aa).

Polar residues predominate over residues 1-10; it reads MQKKVVQSAS. 3 disordered regions span residues 1 to 23, 53 to 83, and 219 to 266; these read MQKKVVQSASKNEELDPHYKRSS, EGTHSASVHPSTSSTSHISSPSAFSVQNPNP, and HQDG…PLST. Residues 55 to 77 are compositionally biased toward low complexity; that stretch reads THSASVHPSTSSTSHISSPSAFS. Positions 246-266 are enriched in polar residues; it reads GSPSPNRSLNVSNNTTPPLST. A phosphothreonine mark is found at threonine 260 and threonine 261. Residues 292-318 constitute a DNA-binding region (zn(2)-C6 fungal-type); the sequence is CAKCQKDNKKCDDARPCQRCIKAKTDC. Over residues 323 to 335 the composition is skewed to basic residues; it reads RKKRPTGVRRGPY. Disordered stretches follow at residues 323–372 and 441–464; these read RKKR…SDNQ and DETGTSSAGSKPFNRKSRNRSFTN. Residues 340–352 show a composition bias toward low complexity; that stretch reads DTSNNTKSTTASS. Over residues 353–372 the composition is skewed to polar residues; it reads GHSTQDSLSSKMLDPSSDNQ.

Its subcellular location is the cytoplasm. It localises to the nucleus. This is an uncharacterized protein from Schizosaccharomyces pombe (strain 972 / ATCC 24843) (Fission yeast).